We begin with the raw amino-acid sequence, 600 residues long: Glutamine--fructose-6-phosphate aminotransferase [isomerizing] (600 aa).

Cys2 acts as the Nucleophile; for GATase activity in catalysis. Residues 2–217 (CGIVGYIGQN…DKEIVLVSRN (216 aa)) form the Glutamine amidotransferase type-2 domain. SIS domains lie at 283 to 422 (IRTA…VKGL) and 452 to 590 (LARD…VDKP). The For Fru-6P isomerization activity role is filled by Lys595.

Homodimer.

The protein resides in the cytoplasm. It catalyses the reaction D-fructose 6-phosphate + L-glutamine = D-glucosamine 6-phosphate + L-glutamate. Its function is as follows. Catalyzes the first step in hexosamine metabolism, converting fructose-6P into glucosamine-6P using glutamine as a nitrogen source. The protein is Glutamine--fructose-6-phosphate aminotransferase [isomerizing] of Oceanobacillus iheyensis (strain DSM 14371 / CIP 107618 / JCM 11309 / KCTC 3954 / HTE831).